We begin with the raw amino-acid sequence, 359 residues long: UDP-N-acetylglucosamine--N-acetylmuramyl-(pentapeptide) pyrophosphoryl-undecaprenol N-acetylglucosamine transferase (359 aa).

UDP-N-acetyl-alpha-D-glucosamine-binding positions include 15-17 (TGG), Asn-127, Arg-166, Ser-191, Ile-245, 264-269 (ALTVSE), and Gln-290.

This sequence belongs to the glycosyltransferase 28 family. MurG subfamily.

The protein resides in the cell inner membrane. It carries out the reaction di-trans,octa-cis-undecaprenyl diphospho-N-acetyl-alpha-D-muramoyl-L-alanyl-D-glutamyl-meso-2,6-diaminopimeloyl-D-alanyl-D-alanine + UDP-N-acetyl-alpha-D-glucosamine = di-trans,octa-cis-undecaprenyl diphospho-[N-acetyl-alpha-D-glucosaminyl-(1-&gt;4)]-N-acetyl-alpha-D-muramoyl-L-alanyl-D-glutamyl-meso-2,6-diaminopimeloyl-D-alanyl-D-alanine + UDP + H(+). The protein operates within cell wall biogenesis; peptidoglycan biosynthesis. Cell wall formation. Catalyzes the transfer of a GlcNAc subunit on undecaprenyl-pyrophosphoryl-MurNAc-pentapeptide (lipid intermediate I) to form undecaprenyl-pyrophosphoryl-MurNAc-(pentapeptide)GlcNAc (lipid intermediate II). In Pseudomonas putida (strain GB-1), this protein is UDP-N-acetylglucosamine--N-acetylmuramyl-(pentapeptide) pyrophosphoryl-undecaprenol N-acetylglucosamine transferase.